We begin with the raw amino-acid sequence, 1096 residues long: Phospholipase D zeta 1 (1096 aa).

The residue at position 2 (Ala2) is an N-acetylalanine. The PX domain occupies 50 to 204 (PKAVIVSVSR…REVCRFLEVS (155 aa)). Positions 131-152 (VQDEDADEVPLHQDESAKNRDV) are disordered. The segment covering 139–151 (VPLHQDESAKNRD) has biased composition (basic and acidic residues). Residues 234 to 342 (DDSNRCCGCC…WVASINDAAL (109 aa)) enclose the PH domain. The PLD phosphodiesterase 1 domain maps to 477–504 (YLWSHHEKLVIVDNQVCFIGGLDLCFGR). Catalysis depends on residues His482, Lys484, and Asp489. A compositionally biased stretch (basic and acidic residues) spans 607–632 (GRQEESDIESKKEEDSIRGIRRDDSF). Positions 607 to 691 (GRQEESDIES…DGDTPMRGFV (85 aa)) are disordered. Positions 892 to 919 (SQVYVHSKIMIVDDRAALIGSANINDRS) constitute a PLD phosphodiesterase 2 domain. Active-site residues include His897, Lys899, and Asp904.

This sequence belongs to the phospholipase D family. PXPH-PLD subfamily. Requires Does not require Ca(2+) or any other cation for activity. as cofactor. As to expression, expressed in inflorescences, flowers, siliques, stems, leaves, and roots. Highest expression in roots.

It is found in the cytoplasmic vesicle. The catalysed reaction is a 1,2-diacyl-sn-glycero-3-phosphocholine + H2O = a 1,2-diacyl-sn-glycero-3-phosphate + choline + H(+). Calcium-independent and PIP2-dependent. Hydrolyzes glycerol-phospholipids at the terminal phosphodiesteric bond to generate phosphatidic acids (PA). Phosphatidylcholine-selective. Regulates root-hair morphogenesis. Contributes to the supply of inorganic phosphorus for cell metabolism and diacylglycerol moieties for galactolipid synthesis in phosphorus-starved roots. Involved in root elongation during phosphate limitation. This is Phospholipase D zeta 1 from Arabidopsis thaliana (Mouse-ear cress).